Consider the following 387-residue polypeptide: Sharpin (387 aa).

Residues 1-180 (MAPPAGGAAA…EREELAGSLA (180 aa)) are self-association. The span at 122 to 132 (EGQNGSKSNSP) shows a compositional bias: polar residues. A disordered region spans residues 122-169 (EGQNGSKSNSPPALGPEACPVSLPSPPEASTLKGPPPEADLPRSPGNL). At serine 165 the chain carries Phosphoserine. The interaction with SHANK1 stretch occupies residues 175-310 (LAGSLARAIA…SAPREAPATG (136 aa)). Positions 219 to 288 (IRLQVTLEDA…PERSLASYGV (70 aa)) constitute a Ubiquitin-like domain. A disordered region spans residues 305–349 (EAPATGPSPQHPQKMDGELGRLFPPSLGLPPGPQPAASSLPSPLQ). Serine 312 is subject to Phosphoserine. A compositionally biased stretch (low complexity) spans 339 to 349 (PAASSLPSPLQ). The RanBP2-type zinc finger occupies 348–377 (LQPSWSCPSCTFINAPDRPGCEMCSTQRPC).

Monomer and homodimer. Component of the LUBAC complex (linear ubiquitin chain assembly complex) which consists of SHARPIN, RBCK1 and RNF31. LUBAC has a MW of approximately 600 kDa suggesting a heteromultimeric assembly of its subunits. Associates with the TNF-R1 signaling complex (TNF-RSC) in a stimulation-dependent manner. Interacts with EYA1, EYA2, SHANK1 and SHANK3 (via ANK repeats). In terms of tissue distribution, highly expressed in skeletal muscle and placenta and at lower levels in brain, heart, colon without mucosa, thymus, spleen, kidney, liver, small intestine, lung and peripheral blood leukocytes. Up-regulated in various tumor tissues such as kidney, liver, ovary and pancreas tumors.

The protein resides in the cytoplasm. The protein localises to the cytosol. Its subcellular location is the synapse. The protein operates within protein modification; protein ubiquitination. Functionally, component of the LUBAC complex which conjugates linear polyubiquitin chains in a head-to-tail manner to substrates and plays a key role in NF-kappa-B activation and regulation of inflammation. LUBAC conjugates linear polyubiquitin to IKBKG and RIPK1 and is involved in activation of the canonical NF-kappa-B and the JNK signaling pathways. Linear ubiquitination mediated by the LUBAC complex interferes with TNF-induced cell death and thereby prevents inflammation. LUBAC is recruited to the TNF-R1 signaling complex (TNF-RSC) following polyubiquitination of TNF-RSC components by BIRC2 and/or BIRC3 and to conjugate linear polyubiquitin to IKBKG and possibly other components contributing to the stability of the complex. The LUBAC complex is also involved in innate immunity by conjugating linear polyubiquitin chains at the surface of bacteria invading the cytosol to form the ubiquitin coat surrounding bacteria. LUBAC is not able to initiate formation of the bacterial ubiquitin coat, and can only promote formation of linear polyubiquitins on pre-existing ubiquitin. The bacterial ubiquitin coat acts as an 'eat-me' signal for xenophagy and promotes NF-kappa-B activation. Together with OTULIN, the LUBAC complex regulates the canonical Wnt signaling during angiogenesis. This chain is Sharpin, found in Homo sapiens (Human).